A 98-amino-acid chain; its full sequence is Large ribosomal subunit protein uL23 (98 aa).

The protein belongs to the universal ribosomal protein uL23 family. Part of the 50S ribosomal subunit. Contacts protein L29, and trigger factor when it is bound to the ribosome.

One of the early assembly proteins it binds 23S rRNA. One of the proteins that surrounds the polypeptide exit tunnel on the outside of the ribosome. Forms the main docking site for trigger factor binding to the ribosome. In Cellvibrio japonicus (strain Ueda107) (Pseudomonas fluorescens subsp. cellulosa), this protein is Large ribosomal subunit protein uL23.